The sequence spans 361 residues: tRNA/tmRNA (uracil-C(5))-methyltransferase (361 aa).

Residues Gln185, Tyr213, Asn218, Glu234, and Asp294 each coordinate S-adenosyl-L-methionine. Cys319 serves as the catalytic Nucleophile. The Proton acceptor role is filled by Glu353.

Belongs to the class I-like SAM-binding methyltransferase superfamily. RNA M5U methyltransferase family. TrmA subfamily.

The enzyme catalyses uridine(54) in tRNA + S-adenosyl-L-methionine = 5-methyluridine(54) in tRNA + S-adenosyl-L-homocysteine + H(+). It catalyses the reaction uridine(341) in tmRNA + S-adenosyl-L-methionine = 5-methyluridine(341) in tmRNA + S-adenosyl-L-homocysteine + H(+). Its function is as follows. Dual-specificity methyltransferase that catalyzes the formation of 5-methyluridine at position 54 (m5U54) in all tRNAs, and that of position 341 (m5U341) in tmRNA (transfer-mRNA). The chain is tRNA/tmRNA (uracil-C(5))-methyltransferase from Pseudomonas entomophila (strain L48).